A 1268-amino-acid chain; its full sequence is Vigilin (1268 aa).

Ser-2 bears the N-acetylserine mark. Thr-8 is subject to Phosphothreonine. Phosphoserine occurs at positions 11, 31, and 35. 14 KH domains span residues 158 to 229 (PKEH…RLEV), 230 to 302 (EKAF…AVEV), 303 to 371 (KKSQ…SVAA), 372 to 442 (PSWL…EINI), 443 to 514 (DHKF…DLII), 515 to 588 (EQRF…SVPI), 589 to 660 (FKQF…EVSI), 661 to 734 (PAKL…DIRA), 735 to 807 (KPEY…SMLV), 808 to 880 (DPKH…ECAI), 881 to 979 (PQKF…EVEV), 980 to 1059 (PFDL…SVTV), 1060 to 1134 (DPKY…DVPL), and 1135 to 1209 (DHRV…ALQV). Phosphothreonine is present on residues Thr-295 and Thr-296. Ser-317 carries the phosphoserine modification. Residue Tyr-437 is modified to Phosphotyrosine. Phosphoserine is present on Ser-645. Residues 910–947 (PDREENPVHSTEPAVQENGDEAGEGREAKDSDPGSPRR) are disordered. The span at 932-947 (GEGREAKDSDPGSPRR) shows a compositional bias: basic and acidic residues. Position 991 is an N6-acetyllysine (Lys-991). Polar residues predominate over residues 1237–1249 (SSEKAPDMSSSEE). The tract at residues 1237-1268 (SSEKAPDMSSSEEFPSFGAQVAPKTLPWGPKR) is disordered. Phosphoserine occurs at positions 1247 and 1252.

It localises to the cytoplasm. The protein resides in the nucleus. Its function is as follows. Appears to play a role in cell sterol metabolism. It may function to protect cells from over-accumulation of cholesterol. In Pongo abelii (Sumatran orangutan), this protein is Vigilin (HDLBP).